The primary structure comprises 977 residues: ATP-dependent RNA helicase DBP10 (977 aa).

The tract at residues 1 to 121 (MGIISKRKRH…NSEKSKHKKG (121 aa)) is disordered. Residues 26–35 (ITSNIGLNTA) show a composition bias toward polar residues. Positions 37–61 (SSDESESSGDDEEEVQDIVDFSDEE) are enriched in acidic residues. Polar residues predominate over residues 70–81 (SNKTLTDNNSFP). The short motif at 121-149 (GSFPSFGFSKLILSNVHKKGFRQPTPIQR) is the Q motif element. In terms of domain architecture, Helicase ATP-binding spans 152–324 (IPLILQKRDI…KAGLTNPVLV (173 aa)). Residue 165–172 (ARTGSGKT) coordinates ATP. The DEAD box motif lies at 272 to 275 (DEAD). Disordered regions lie at residues 377-403 (NKSLSDSDSEDEDNKGKQNSRKSKKGK) and 871-977 (KTGA…KRKF). Residues 394–403 (QNSRKSKKGK) show a composition bias toward basic residues. A Helicase C-terminal domain is found at 403 to 554 (KFQKLKVSAS…SMYEASCKLM (152 aa)). The segment covering 878–894 (SIPTNLLSDPTTDSGSQ) has biased composition (polar residues). The segment covering 910–921 (RLPDKFRDDYQS) has biased composition (basic and acidic residues). Residues 961–977 (KEKKRQKNARPTKKRKF) show a composition bias toward basic residues.

Belongs to the DEAD box helicase family. DDX54/DBP10 subfamily.

The protein resides in the nucleus. The protein localises to the nucleolus. The catalysed reaction is ATP + H2O = ADP + phosphate + H(+). ATP-binding RNA helicase involved in the biogenesis of 60S ribosomal subunits and is required for the normal formation of 25S and 5.8S rRNAs. The sequence is that of ATP-dependent RNA helicase DBP10 (DBP10) from Vanderwaltozyma polyspora (strain ATCC 22028 / DSM 70294 / BCRC 21397 / CBS 2163 / NBRC 10782 / NRRL Y-8283 / UCD 57-17) (Kluyveromyces polysporus).